The primary structure comprises 411 residues: Peptidase T (411 aa).

His-79 contributes to the Zn(2+) binding site. Residue Asp-81 is part of the active site. Residue Asp-142 participates in Zn(2+) binding. The Proton acceptor role is filled by Glu-176. Glu-177, Asp-199, and His-381 together coordinate Zn(2+).

It belongs to the peptidase M20B family. Zn(2+) serves as cofactor.

Its subcellular location is the cytoplasm. It catalyses the reaction Release of the N-terminal residue from a tripeptide.. In terms of biological role, cleaves the N-terminal amino acid of tripeptides. The chain is Peptidase T from Geobacillus kaustophilus (strain HTA426).